Here is a 65-residue protein sequence, read N- to C-terminus: Large ribosomal subunit protein bL35 (65 aa).

Belongs to the bacterial ribosomal protein bL35 family.

This chain is Large ribosomal subunit protein bL35, found in Paraburkholderia xenovorans (strain LB400).